The following is a 410-amino-acid chain: Arginine deiminase (410 aa).

The active-site Amidino-cysteine intermediate is the Cys-400.

It belongs to the arginine deiminase family.

It is found in the cytoplasm. The catalysed reaction is L-arginine + H2O = L-citrulline + NH4(+). The protein operates within amino-acid degradation; L-arginine degradation via ADI pathway; carbamoyl phosphate from L-arginine: step 1/2. In Levilactobacillus brevis (strain ATCC 367 / BCRC 12310 / CIP 105137 / JCM 1170 / LMG 11437 / NCIMB 947 / NCTC 947) (Lactobacillus brevis), this protein is Arginine deiminase.